Consider the following 306-residue polypeptide: Elongation factor Ts (306 aa).

The interval 80–83 (TDFV) is involved in Mg(2+) ion dislocation from EF-Tu.

Belongs to the EF-Ts family.

The protein localises to the cytoplasm. In terms of biological role, associates with the EF-Tu.GDP complex and induces the exchange of GDP to GTP. It remains bound to the aminoacyl-tRNA.EF-Tu.GTP complex up to the GTP hydrolysis stage on the ribosome. This is Elongation factor Ts from Methylorubrum extorquens (strain CM4 / NCIMB 13688) (Methylobacterium extorquens).